Here is a 395-residue protein sequence, read N- to C-terminus: Oxalate oxidoreductase subunit alpha (395 aa).

As to quaternary structure, dimer of heterotrimer of one alpha, one beta and one delta subunit.

It carries out the reaction oxidized 2[4Fe-4S]-[ferredoxin] + oxalate = reduced 2[4Fe-4S]-[ferredoxin] + 2 CO2. In terms of biological role, catalyzes the anaerobic oxidation of oxalate using a broad range of electron acceptors, including ferredoxin and the nickel-dependent carbon monoxide dehydrogenase. Does not require coenzyme A as cosubstrate. Enables anaerobic growth on oxalate which is used as energy source by the bacteria. In Moorella thermoacetica (strain ATCC 39073 / JCM 9320), this protein is Oxalate oxidoreductase subunit alpha.